The chain runs to 57 residues: Zinc finger protein MJ0458.1 (57 aa).

4 short sequence motifs (c(P)XCG motif) span residues 8 to 12, 26 to 30, 37 to 41, and 49 to 53; these read CISCN, CPNCG, CERCR, and CPKCG. Positions 26 and 29 each coordinate Zn(2+). Zn(2+) contacts are provided by cysteine 49 and cysteine 52.

As to quaternary structure, monomer in solution.

Its function is as follows. Zinc-binding protein that binds only one zinc ion. The sequence is that of Zinc finger protein MJ0458.1 from Methanocaldococcus jannaschii (strain ATCC 43067 / DSM 2661 / JAL-1 / JCM 10045 / NBRC 100440) (Methanococcus jannaschii).